The sequence spans 176 residues: ATP-dependent protease subunit HslV (176 aa).

Residue Thr2 is part of the active site. The Na(+) site is built by Gly157, Cys160, and Thr163.

This sequence belongs to the peptidase T1B family. HslV subfamily. As to quaternary structure, a double ring-shaped homohexamer of HslV is capped on each side by a ring-shaped HslU homohexamer. The assembly of the HslU/HslV complex is dependent on binding of ATP.

The protein localises to the cytoplasm. The enzyme catalyses ATP-dependent cleavage of peptide bonds with broad specificity.. Its activity is regulated as follows. Allosterically activated by HslU binding. Protease subunit of a proteasome-like degradation complex believed to be a general protein degrading machinery. The polypeptide is ATP-dependent protease subunit HslV (Pseudomonas syringae pv. tomato (strain ATCC BAA-871 / DC3000)).